The primary structure comprises 277 residues: tRNA (guanine-N(7)-)-methyltransferase (277 aa).

The interval 1 to 37 (MAGTETGDAAGTEAPQPQKRYYRQRAHSNPMADHTLR) is disordered. Position 28 is a phosphoserine (Ser28). 6 residues coordinate S-adenosyl-L-methionine: Gly85, Glu108, Arg110, Asn141, Ala142, and Leu161. The active site involves Asp164. An alphaC helix region spans residues 165–173 (PHFKRTKHK). The S-adenosyl-L-methionine site is built by Thr239 and Glu241. The tract at residues 239–247 (TEEGKKVLR) is alpha6 helix.

Belongs to the class I-like SAM-binding methyltransferase superfamily. TrmB family. In terms of assembly, catalytic component of the METTL1-WDR4 complex, composed of METTL1 and WDR4. Phosphorylation at Ser-28 by PKB/AKT1 inactivates its methyltransferase activity via a steric interference mechanism in the active site that locally disrupts the catalytic center. Phosphorylation at Ser-28 does not affect the interaction with WDR4.

The protein localises to the nucleus. It carries out the reaction guanosine(46) in tRNA + S-adenosyl-L-methionine = N(7)-methylguanosine(46) in tRNA + S-adenosyl-L-homocysteine. The enzyme catalyses a guanosine in mRNA + S-adenosyl-L-methionine = an N(7)-methylguanosine in mRNA + S-adenosyl-L-homocysteine. The catalysed reaction is a guanosine in miRNA + S-adenosyl-L-methionine = an N(7)-methylguanosine in miRNA + S-adenosyl-L-homocysteine. Its pathway is tRNA modification; N(7)-methylguanine-tRNA biosynthesis. Its function is as follows. Catalytic component of METTL1-WDR4 methyltransferase complex that mediates the formation of N(7)-methylguanine in a subset of RNA species, such as tRNAs, mRNAs and microRNAs (miRNAs). Catalyzes the formation of N(7)-methylguanine at position 46 (m7G46) in a large subset of tRNAs that contain the 5'-RAGGU-3' motif within the variable loop. M7G46 interacts with C13-G22 in the D-loop to stabilize tRNA tertiary structure and protect tRNAs from decay. Also acts as a methyltransferase for a subset of internal N(7)-methylguanine in mRNAs. Internal N(7)-methylguanine methylation of mRNAs in response to stress promotes their relocalization to stress granules, thereby suppressing their translation. Also methylates a specific subset of miRNAs, such as let-7. N(7)-methylguanine methylation of let-7 miRNA promotes let-7 miRNA processing by disrupting an inhibitory secondary structure within the primary miRNA transcript (pri-miRNA). Acts as a regulator of embryonic stem cell self-renewal and differentiation. In Bos taurus (Bovine), this protein is tRNA (guanine-N(7)-)-methyltransferase.